The following is a 1154-amino-acid chain: PDZ domain-containing protein 8 (1154 aa).

The helical transmembrane segment at 2–24 threads the bilayer; the sequence is GLLLMILASAVLGSFLTLLAQFF. The segment at 66-90 is disordered; that stretch reads DEEPSGAAPEGGATPTAAPETPAPP. Residues 70–85 are compositionally biased toward low complexity; sequence SGAAPEGGATPTAAPE. Positions 91–294 constitute an SMP-LTD domain; sequence TRETCYFLNA…LPNYKIRFKP (204 aa). The region spanning 366-449 is the PDZ domain; that stretch reads TVELIKGNLQ…RVLVYYERPV (84 aa). A phosphoserine mark is found at Ser496, Ser521, and Ser538. Residues 548–612 form a disordered region; it reads GSHPLPPKIQ…SADAPNQAEP (65 aa). The segment at 840-891 adopts a Phorbol-ester/DAG-type zinc-finger fold; the sequence is KHSFQDTQFQNPTWCDYCKKKVWTKAASQCMFCAYVCHKKCQEKCLAETSVC. Positions 955 to 999 are disordered; it reads RLSEPGTDLVEPSPKHTPNTSDNEGSDTEVCGPNSPSKRGNSTGI. Ser967 and Ser980 each carry phosphoserine. Positions 988-998 are enriched in polar residues; sequence NSPSKRGNSTG. Residues 1028–1063 adopt a coiled-coil conformation; it reads PTEERIQKLEFMLDKLQNEIDQELEHNNSLVREEKE. Residues 1132–1144 are compositionally biased toward polar residues; the sequence is SQLIDSQPFSSIS. The disordered stretch occupies residues 1132-1154; it reads SQLIDSQPFSSISDDLFGPSESV.

Interacts with MSN. As to quaternary structure, (Microbial infection) Interacts with HIV-1 Gag polyprotein p55.

The protein resides in the endoplasmic reticulum membrane. In terms of biological role, molecular tethering protein that connects endoplasmic reticulum and mitochondria membranes. PDZD8-dependent endoplasmic reticulum-mitochondria membrane tethering is essential for endoplasmic reticulum-mitochondria Ca(2+) transfer. In neurons, involved in the regulation of dendritic Ca(2+) dynamics by regulating mitochondrial Ca(2+) uptake in neurons. Plays an indirect role in the regulation of cell morphology and cytoskeletal organization. May inhibit herpes simplex virus 1 infection at an early stage. This chain is PDZ domain-containing protein 8, found in Homo sapiens (Human).